The chain runs to 545 residues: CTP synthase (545 aa).

The interval 1-266 is amidoligase domain; that stretch reads MTTNYIFVTG…DDYICKRFSL (266 aa). Serine 14 lines the CTP pocket. Residue serine 14 coordinates UTP. Residues 15-20 and aspartate 72 contribute to the ATP site; that span reads SLGKGI. Mg(2+)-binding residues include aspartate 72 and glutamate 140. CTP-binding positions include 147-149, 187-192, and lysine 223; these read DIE and KTKPTQ. UTP contacts are provided by residues 187-192 and lysine 223; that span reads KTKPTQ. 239 to 241 provides a ligand contact to ATP; sequence KDV. In terms of domain architecture, Glutamine amidotransferase type-1 spans 291–542; the sequence is TIGMIGKYVE…VKAAGDYQKR (252 aa). Glycine 352 is an L-glutamine binding site. Residue cysteine 379 is the Nucleophile; for glutamine hydrolysis of the active site. L-glutamine is bound by residues 380-383, glutamate 403, and arginine 470; that span reads LGMQ. Residues histidine 515 and glutamate 517 contribute to the active site.

This sequence belongs to the CTP synthase family. Homotetramer.

It carries out the reaction UTP + L-glutamine + ATP + H2O = CTP + L-glutamate + ADP + phosphate + 2 H(+). It catalyses the reaction L-glutamine + H2O = L-glutamate + NH4(+). The enzyme catalyses UTP + NH4(+) + ATP = CTP + ADP + phosphate + 2 H(+). Its pathway is pyrimidine metabolism; CTP biosynthesis via de novo pathway; CTP from UDP: step 2/2. Allosterically activated by GTP, when glutamine is the substrate; GTP has no effect on the reaction when ammonia is the substrate. The allosteric effector GTP functions by stabilizing the protein conformation that binds the tetrahedral intermediate(s) formed during glutamine hydrolysis. Inhibited by the product CTP, via allosteric rather than competitive inhibition. Its function is as follows. Catalyzes the ATP-dependent amination of UTP to CTP with either L-glutamine or ammonia as the source of nitrogen. Regulates intracellular CTP levels through interactions with the four ribonucleotide triphosphates. In Yersinia pseudotuberculosis serotype O:1b (strain IP 31758), this protein is CTP synthase.